Consider the following 554-residue polypeptide: uncharacterized protein (554 aa).

It to M.jannaschii MJ0047, MJ0162 and MJ1236.

This is an uncharacterized protein from Synechocystis sp. (strain ATCC 27184 / PCC 6803 / Kazusa).